The sequence spans 676 residues: Translation initiation factor IF-2, mitochondrial (676 aa).

A tr-type G domain is found at 143-326; the sequence is KRAPVVTIMG…MDIRAENSPK (184 aa). A G1 region spans residues 152–159; sequence GHVDHGKT. Residue 152–159 coordinates GTP; that stretch reads GHVDHGKT. A G2 region spans residues 177-181; the sequence is GITQH. GTP-binding positions include 200–203 and 254–257; these read DTPG and TKID. The tract at residues 200–203 is G3; the sequence is DTPG. Positions 254–257 are G4; sequence TKID. Residues 296-298 form a G5 region; that stretch reads SAK.

It belongs to the TRAFAC class translation factor GTPase superfamily. Classic translation factor GTPase family. IF-2 subfamily.

The protein resides in the mitochondrion. Its function is as follows. One of the essential components for the initiation of protein synthesis. Protects formylmethionyl-tRNA from spontaneous hydrolysis and promotes its binding to the 30S ribosomal subunits. Also involved in the hydrolysis of GTP during the formation of the 70S ribosomal complex. The sequence is that of Translation initiation factor IF-2, mitochondrial (IFM1) from Saccharomyces cerevisiae (strain ATCC 204508 / S288c) (Baker's yeast).